Reading from the N-terminus, the 395-residue chain is Synaptotagmin-8 (395 aa).

The Extracellular portion of the chain corresponds to Met1–Ile44. A helical; Signal-anchor for type III membrane protein transmembrane segment spans residues Leu45–Cys65. The Cytoplasmic portion of the chain corresponds to Tyr66 to Ser395. C2 domains follow at residues Pro113–Tyr229 and Gln241–His370.

The protein belongs to the synaptotagmin family. Homodimer or homooligomer. Homodimerization and homooligomerization do not depend on Ca(2+). Interacts with SYNCRIP isoform 2 C-terminus. Binds inositol 1,3,4,5-tetrakisphosphate (IP4). Binds to AP2 in a Ca(2+)-independent manner. Interacts with STX1A, STX1B and STX2; the interaction is Ca(2+)-dependent. As to expression, ubiquitous. Strongly expressed in heart, kidney, cerebral cortex, pancreas, and many insulin-secreting cells; lower expression in spleen. Broadly distributed in kidney.

The protein resides in the cell membrane. It localises to the cytoplasmic vesicle. The protein localises to the secretory vesicle. Its subcellular location is the acrosome. Its function is as follows. Involved in the trafficking and exocytosis of secretory vesicles in non-neuronal tissues. Mediates Ca(2+)-regulation of exocytosis acrosomal reaction in sperm. May mediate Ca(2+)-regulation of exocytosis in insulin secreted cells. The sequence is that of Synaptotagmin-8 (Syt8) from Rattus norvegicus (Rat).